Here is a 422-residue protein sequence, read N- to C-terminus: UDP-N-acetylglucosamine 1-carboxyvinyltransferase (422 aa).

Residue 22–23 (KN) participates in phosphoenolpyruvate binding. Arginine 92 is a binding site for UDP-N-acetyl-alpha-D-glucosamine. Cysteine 116 (proton donor) is an active-site residue. A 2-(S-cysteinyl)pyruvic acid O-phosphothioketal modification is found at cysteine 116. UDP-N-acetyl-alpha-D-glucosamine-binding positions include 121–125 (RPVDQ), aspartate 307, and isoleucine 329.

The protein belongs to the EPSP synthase family. MurA subfamily.

The protein localises to the cytoplasm. It catalyses the reaction phosphoenolpyruvate + UDP-N-acetyl-alpha-D-glucosamine = UDP-N-acetyl-3-O-(1-carboxyvinyl)-alpha-D-glucosamine + phosphate. The protein operates within cell wall biogenesis; peptidoglycan biosynthesis. Cell wall formation. Adds enolpyruvyl to UDP-N-acetylglucosamine. This chain is UDP-N-acetylglucosamine 1-carboxyvinyltransferase, found in Psychrobacter arcticus (strain DSM 17307 / VKM B-2377 / 273-4).